The chain runs to 340 residues: Glucan endo-1,3-beta-glucosidase (340 aa).

An N-terminal signal peptide occupies residues 1 to 28 (MATKASLSIKGFALLVSVLVAVPTRVQS). Residue glutamate 122 is the Proton donor of the active site. Residue glutamate 264 is the Nucleophile of the active site.

The protein belongs to the glycosyl hydrolase 17 family. Monomer. In terms of tissue distribution, expressed in fruit peel and pulp.

The catalysed reaction is Hydrolysis of (1-&gt;3)-beta-D-glucosidic linkages in (1-&gt;3)-beta-D-glucans.. Functionally, possesses beta-1,3-endoglucanase activity in vitro. May play a role in fruit pulp softening process. Can cleave beta-1,6-branched glucans in vitro. This Musa acuminata (Banana) protein is Glucan endo-1,3-beta-glucosidase.